Reading from the N-terminus, the 518-residue chain is Membrane-bound lytic murein transglycosylase F (518 aa).

Residues Met-1–Ala-21 form the signal peptide. A non-LT domain region spans residues Leu-22–Gly-269. Residues Asp-270–Asn-518 are LT domain. Glu-314 is an active-site residue.

This sequence in the N-terminal section; belongs to the bacterial solute-binding protein 3 family. The protein in the C-terminal section; belongs to the transglycosylase Slt family.

The protein localises to the cell outer membrane. It catalyses the reaction Exolytic cleavage of the (1-&gt;4)-beta-glycosidic linkage between N-acetylmuramic acid (MurNAc) and N-acetylglucosamine (GlcNAc) residues in peptidoglycan, from either the reducing or the non-reducing ends of the peptidoglycan chains, with concomitant formation of a 1,6-anhydrobond in the MurNAc residue.. Murein-degrading enzyme that degrades murein glycan strands and insoluble, high-molecular weight murein sacculi, with the concomitant formation of a 1,6-anhydromuramoyl product. Lytic transglycosylases (LTs) play an integral role in the metabolism of the peptidoglycan (PG) sacculus. Their lytic action creates space within the PG sacculus to allow for its expansion as well as for the insertion of various structures such as secretion systems and flagella. This is Membrane-bound lytic murein transglycosylase F from Escherichia coli O6:H1 (strain CFT073 / ATCC 700928 / UPEC).